Here is a 388-residue protein sequence, read N- to C-terminus: Succinate--CoA ligase [ADP-forming] subunit beta (388 aa).

In terms of domain architecture, ATP-grasp spans 9–244; sequence KQLFARYGLP…QSQEDPREAQ (236 aa). Residues K46, 53–55, E99, T102, and E107 contribute to the ATP site; that span reads GRG. The Mg(2+) site is built by N199 and D213. Residues N264 and 321–323 each bind substrate; that span reads GIV.

It belongs to the succinate/malate CoA ligase beta subunit family. In terms of assembly, heterotetramer of two alpha and two beta subunits. The cofactor is Mg(2+).

The catalysed reaction is succinate + ATP + CoA = succinyl-CoA + ADP + phosphate. It carries out the reaction GTP + succinate + CoA = succinyl-CoA + GDP + phosphate. It participates in carbohydrate metabolism; tricarboxylic acid cycle; succinate from succinyl-CoA (ligase route): step 1/1. Its function is as follows. Succinyl-CoA synthetase functions in the citric acid cycle (TCA), coupling the hydrolysis of succinyl-CoA to the synthesis of either ATP or GTP and thus represents the only step of substrate-level phosphorylation in the TCA. The beta subunit provides nucleotide specificity of the enzyme and binds the substrate succinate, while the binding sites for coenzyme A and phosphate are found in the alpha subunit. The polypeptide is Succinate--CoA ligase [ADP-forming] subunit beta (Salmonella dublin (strain CT_02021853)).